The following is a 272-amino-acid chain: Energy-coupling factor transporter ATP-binding protein EcfA1 (272 aa).

Positions 2-237 (IKVSDVCFSY…KNIIEKAKID (236 aa)) constitute an ABC transporter domain. Residue 37-44 (GHNGSGKS) participates in ATP binding.

It belongs to the ABC transporter superfamily. Energy-coupling factor EcfA family. As to quaternary structure, forms a stable energy-coupling factor (ECF) transporter complex composed of 2 membrane-embedded substrate-binding proteins (S component), 2 ATP-binding proteins (A component) and 2 transmembrane proteins (T component).

It is found in the cell membrane. Functionally, ATP-binding (A) component of a common energy-coupling factor (ECF) ABC-transporter complex. Unlike classic ABC transporters this ECF transporter provides the energy necessary to transport a number of different substrates. This Mesomycoplasma hyopneumoniae (strain J / ATCC 25934 / NCTC 10110) (Mycoplasma hyopneumoniae) protein is Energy-coupling factor transporter ATP-binding protein EcfA1.